The sequence spans 124 residues: MIIGLGIDITELDRIKRSLDKYGERFAEKILTPAEIELIPAKNPVPYVAARFAAKEAAVKALGTGFAEGITFHTIEITRLDSGAPQLNFLGKALERSKSMGVEGIHISITHGRDTAAAVVVLEK.

Mg(2+) is bound by residues Asp8 and Glu56.

This sequence belongs to the P-Pant transferase superfamily. AcpS family. It depends on Mg(2+) as a cofactor.

It is found in the cytoplasm. The catalysed reaction is apo-[ACP] + CoA = holo-[ACP] + adenosine 3',5'-bisphosphate + H(+). Transfers the 4'-phosphopantetheine moiety from coenzyme A to a Ser of acyl-carrier-protein. The sequence is that of Holo-[acyl-carrier-protein] synthase from Maridesulfovibrio salexigens (strain ATCC 14822 / DSM 2638 / NCIMB 8403 / VKM B-1763) (Desulfovibrio salexigens).